The chain runs to 367 residues: Pepsin A (367 aa).

Residues 1–42 constitute a propeptide, activation peptide; it reads SIHRVPLKKGKSLRKQLKDHGLLEDFLKKHPYNPASKYHPVL. In terms of domain architecture, Peptidase A1 spans 59–364; the sequence is YYGTISIGTP…DRANNKVGLS (306 aa). Residue Asp77 is part of the active site. A disulfide bond links Cys90 and Cys95. A glycan (N-linked (GlcNAc...) asparagine) is linked at Asn113. Cysteines 251 and 255 form a disulfide. Asp260 is an active-site residue. A disulfide bridge connects residues Cys290 and Cys323.

The protein belongs to the peptidase A1 family.

The enzyme catalyses Preferential cleavage: hydrophobic, preferably aromatic, residues in P1 and P1' positions. Cleaves 1-Phe-|-Val-2, 4-Gln-|-His-5, 13-Glu-|-Ala-14, 14-Ala-|-Leu-15, 15-Leu-|-Tyr-16, 16-Tyr-|-Leu-17, 23-Gly-|-Phe-24, 24-Phe-|-Phe-25 and 25-Phe-|-Tyr-26 bonds in the B chain of insulin.. Its function is as follows. Shows particularly broad specificity; although bonds involving phenylalanine and leucine are preferred, many others are also cleaved to some extent. This is Pepsin A (PGA) from Gallus gallus (Chicken).